We begin with the raw amino-acid sequence, 216 residues long: 3-isopropylmalate dehydratase small subunit (216 aa).

This sequence belongs to the LeuD family. LeuD type 1 subfamily. Heterodimer of LeuC and LeuD.

The enzyme catalyses (2R,3S)-3-isopropylmalate = (2S)-2-isopropylmalate. The protein operates within amino-acid biosynthesis; L-leucine biosynthesis; L-leucine from 3-methyl-2-oxobutanoate: step 2/4. Catalyzes the isomerization between 2-isopropylmalate and 3-isopropylmalate, via the formation of 2-isopropylmaleate. This chain is 3-isopropylmalate dehydratase small subunit, found in Psychrobacter sp. (strain PRwf-1).